The chain runs to 578 residues: Proline--tRNA ligase (578 aa).

It belongs to the class-II aminoacyl-tRNA synthetase family. ProS type 1 subfamily. In terms of assembly, homodimer.

It is found in the cytoplasm. It carries out the reaction tRNA(Pro) + L-proline + ATP = L-prolyl-tRNA(Pro) + AMP + diphosphate. Functionally, catalyzes the attachment of proline to tRNA(Pro) in a two-step reaction: proline is first activated by ATP to form Pro-AMP and then transferred to the acceptor end of tRNA(Pro). As ProRS can inadvertently accommodate and process non-cognate amino acids such as alanine and cysteine, to avoid such errors it has two additional distinct editing activities against alanine. One activity is designated as 'pretransfer' editing and involves the tRNA(Pro)-independent hydrolysis of activated Ala-AMP. The other activity is designated 'posttransfer' editing and involves deacylation of mischarged Ala-tRNA(Pro). The misacylated Cys-tRNA(Pro) is not edited by ProRS. This is Proline--tRNA ligase from Brachyspira hyodysenteriae (strain ATCC 49526 / WA1).